The primary structure comprises 219 residues: Probable lipoprotein YiaD (219 aa).

Residues 1-20 form the signal peptide; that stretch reads MKKRVYLIAAVVSGALAVSG. Residue C21 is the site of N-palmitoyl cysteine attachment. C21 carries S-diacylglycerol cysteine lipidation. The next 2 membrane-spanning stretches (helical) occupy residues 37–55 and 62–84; these read IGAG…LSSS and GALI…MDVQ. The region spanning 103–219 is the OmpA-like domain; that stretch reads GDNIILNMPN…RRVEITLSPL (117 aa).

The protein resides in the cell inner membrane. It is found in the cell outer membrane. Functionally, suppresses temperature-sensitive mutations in BamB when overexpressed. This chain is Probable lipoprotein YiaD (yiaD), found in Escherichia coli (strain K12).